Consider the following 469-residue polypeptide: MSASNCLRCLVRPSAVALVPRQMLQVGGGSLTFTATAATKGASSANTGGRQNANRPQKLRFKKTKKKNVVSSGKPPLPGERKAYRKKIVLSNNNALPVPGLETLRPNDLAKQDNVGSVKALPEDVVDALRAMEAFKPTQCWGIFRQPSVLIRQETVDLTKKMKAAGADGKTIRMVIEGNRVTGKSLLLLQAMTHAFMNDWVVLHIPEAQELTTAVTEYAPIENSPLWTQPTYTLKLLQSFKRANEKVLSRMNTVYSHADLPQIIPVNSPLLQLINSAKEADGAWTVFQALWRELNAENVPGRPPILFSLDGLAHIMKVSDYRNPAFELIHSHDLALVKLFTDCLSGATVMPNGGAVLGATTRGNSPRSASMELAIAQREAEKAGEKEVPQRDPYSKKYDDRVEAVMKSVEILRLKGVSKTEARGLLEYWAASGMLKKRVDESMVSEKWTLSGNGVVGEMERASLLTMKA.

ATP is bound at residue L150.

The protein belongs to the mitochondrion-specific ribosomal protein mS29 family. Component of the mitochondrial small ribosomal subunit (mt-SSU). Mature N.crassa 74S mitochondrial ribosomes consist of a small (37S) and a large (54S) subunit. The 37S small subunit contains a 16S ribosomal RNA (16S mt-rRNA) and 32 different proteins. The 54S large subunit contains a 23S rRNA (23S mt-rRNA) and 42 different proteins.

The protein resides in the mitochondrion. In terms of biological role, component of the mitochondrial ribosome (mitoribosome), a dedicated translation machinery responsible for the synthesis of mitochondrial genome-encoded proteins, including at least some of the essential transmembrane subunits of the mitochondrial respiratory chain. The mitoribosomes are attached to the mitochondrial inner membrane and translation products are cotranslationally integrated into the membrane. The protein is Small ribosomal subunit protein mS29 (rsm23) of Neurospora crassa (strain ATCC 24698 / 74-OR23-1A / CBS 708.71 / DSM 1257 / FGSC 987).